We begin with the raw amino-acid sequence, 506 residues long: Cobyric acid synthase (506 aa).

The region spanning 251–448 (DITIAIVQLP…LHGLFDSDAF (198 aa)) is the GATase cobBQ-type domain. C332 (nucleophile) is an active-site residue. The active site involves H440.

The protein belongs to the CobB/CobQ family. CobQ subfamily.

The protein operates within cofactor biosynthesis; adenosylcobalamin biosynthesis. Catalyzes amidations at positions B, D, E, and G on adenosylcobyrinic A,C-diamide. NH(2) groups are provided by glutamine, and one molecule of ATP is hydrogenolyzed for each amidation. This Salmonella dublin (strain CT_02021853) protein is Cobyric acid synthase.